Consider the following 496-residue polypeptide: ADP-dependent glucokinase (496 aa).

The N-terminal stretch at methionine 1–leucine 22 is a signal peptide. The ADPK domain maps to serine 52–aspartate 496. Mg(2+)-binding residues include glutamate 297, glutamate 328, and aspartate 481. Catalysis depends on aspartate 481, which acts as the Proton acceptor.

The protein belongs to the ADP-dependent glucokinase family. Monomer. It depends on Mg(2+) as a cofactor.

It localises to the secreted. It catalyses the reaction D-glucose + ADP = D-glucose 6-phosphate + AMP + H(+). Its pathway is carbohydrate degradation; glycolysis. In terms of biological role, catalyzes the phosphorylation of D-glucose to D-glucose 6-phosphate using ADP as the phosphate donor. GDP and CDP can replace ADP, but with reduced efficiency. This is ADP-dependent glucokinase (Adpgk) from Mus musculus (Mouse).